The chain runs to 34 residues: Protamine-Z1/Z2 (34 aa).

A disordered region spans residues 1–34 (PRRRRRSSRPVRRRRRYRRSTAARRRRRVVRRRR).

Testis.

Its subcellular location is the nucleus. It localises to the chromosome. Functionally, protamines substitute for histones in the chromatin of sperm during the haploid phase of spermatogenesis. They compact sperm DNA into a highly condensed, stable and inactive complex. The chain is Protamine-Z1/Z2 from Sarda orientalis (Striped bonito).